The primary structure comprises 295 residues: Phosphatidylglycerol--prolipoprotein diacylglyceryl transferase (295 aa).

The next 4 membrane-spanning stretches (helical) occupy residues tryptophan 28–threonine 48, leucine 69–tyrosine 89, isoleucine 101–alanine 121, and isoleucine 131–glycine 151. Arginine 152 contributes to the a 1,2-diacyl-sn-glycero-3-phospho-(1'-sn-glycerol) binding site. The next 3 membrane-spanning stretches (helical) occupy residues glutamine 195–tryptophan 215, glycine 224–phenylalanine 244, and glycine 268–leucine 288.

This sequence belongs to the Lgt family.

Its subcellular location is the cell inner membrane. The catalysed reaction is L-cysteinyl-[prolipoprotein] + a 1,2-diacyl-sn-glycero-3-phospho-(1'-sn-glycerol) = an S-1,2-diacyl-sn-glyceryl-L-cysteinyl-[prolipoprotein] + sn-glycerol 1-phosphate + H(+). It functions in the pathway protein modification; lipoprotein biosynthesis (diacylglyceryl transfer). Catalyzes the transfer of the diacylglyceryl group from phosphatidylglycerol to the sulfhydryl group of the N-terminal cysteine of a prolipoprotein, the first step in the formation of mature lipoproteins. The protein is Phosphatidylglycerol--prolipoprotein diacylglyceryl transferase of Ruegeria pomeroyi (strain ATCC 700808 / DSM 15171 / DSS-3) (Silicibacter pomeroyi).